Reading from the N-terminus, the 520-residue chain is GMP synthase [glutamine-hydrolyzing] (520 aa).

The region spanning 9 to 202 (TILIIDFGSQ…VHRIVGVKPG (194 aa)) is the Glutamine amidotransferase type-1 domain. Catalysis depends on C86, which acts as the Nucleophile. Active-site residues include H176 and E178. One can recognise a GMPS ATP-PPase domain in the interval 203–395 (WTMGAYREQA…LGLPDSFIGR (193 aa)). ATP is bound at residue 230-236 (SGGVDSS).

As to quaternary structure, homodimer.

The catalysed reaction is XMP + L-glutamine + ATP + H2O = GMP + L-glutamate + AMP + diphosphate + 2 H(+). The protein operates within purine metabolism; GMP biosynthesis; GMP from XMP (L-Gln route): step 1/1. Functionally, catalyzes the synthesis of GMP from XMP. This is GMP synthase [glutamine-hydrolyzing] from Brucella ovis (strain ATCC 25840 / 63/290 / NCTC 10512).